Consider the following 93-residue polypeptide: Small ribosomal subunit protein uS19 (93 aa).

It belongs to the universal ribosomal protein uS19 family.

Functionally, protein S19 forms a complex with S13 that binds strongly to the 16S ribosomal RNA. The chain is Small ribosomal subunit protein uS19 from Lactobacillus helveticus (strain DPC 4571).